The following is a 299-amino-acid chain: MKKVRAAIVGYGNIGRYVLEALQAAPDFEIAGVVRRAGAENKPAELNDYAVVKDIKELQGVDVAILCTPTRSVEKYAKEILAMGINTVDSFDIHTGIVDLRRELGACAKEHGAVSIISAGWDPGSDSIVRTMLEAIAPKGITYTNFGPGMSMGHTVAVKAIDGVKAALSMTIPTGTGIHRRMVYIELKDGYKFEEVAAAIKSDAYFVNDETHVKQVPSVDALLDMGHGVNLTRKGVSGKTQNQLFEFNMRINNPALTAQVLVCVARASMKQQPGCYTMVEVPVIDLLPGDREEWIGHLV.

NADP(+)-binding positions include 11–14, Arg36, 67–70, 90–92, and 119–123; these read YGNI, CTPT, SFD, and AGWDP. Substrate contacts are provided by residues Asp92, Asp122, Phe146, 152-153, Thr171, Arg181, His227, and Asn253; that span reads MG.

The protein belongs to the diaminopimelate dehydrogenase family. Homodimer.

The enzyme catalyses meso-2,6-diaminopimelate + NADP(+) + H2O = (S)-2-amino-6-oxoheptanedioate + NH4(+) + NADPH + H(+). The protein operates within amino-acid biosynthesis; L-lysine biosynthesis via DAP pathway; DL-2,6-diaminopimelate from (S)-tetrahydrodipicolinate: step 1/1. Its function is as follows. Catalyzes the reversible NADPH-dependent reductive amination of L-2-amino-6-oxopimelate, the acyclic form of L-tetrahydrodipicolinate, to generate the meso compound, D,L-2,6-diaminopimelate. Probably plays a role in lysine biosynthesis. Exhibits a high substrate specificity for meso-2,6-diaminopimelate (m-DAP), since the activity with L,L-2,6-diaminopimelate is less than 5% of the activity observed with m-DAP. Can use NAD(+) only very poorly since the activity observed in the presence of NAD(+) is about 14% of that with NADP(+). The protein is Meso-diaminopimelate D-dehydrogenase (ddh) of Bacteroides fragilis (strain ATCC 25285 / DSM 2151 / CCUG 4856 / JCM 11019 / LMG 10263 / NCTC 9343 / Onslow / VPI 2553 / EN-2).